We begin with the raw amino-acid sequence, 516 residues long: uncharacterized protein (516 aa).

9 helical membrane-spanning segments follow: residues 183-203 (SAAD…GDGV), 261-281 (VLKT…TYII), 308-328 (VMNG…TALL), 329-349 (LDHQ…AYSF), 356-376 (LLDV…GQVL), 379-399 (LAFS…LALA), 430-450 (LGHG…FLAL), 461-481 (PAWL…IWLL), and 492-512 (IVFA…ASAF).

It localises to the cell membrane. Possible permease/transporter. This is an uncharacterized protein from Sinorhizobium fredii (strain NBRC 101917 / NGR234).